Reading from the N-terminus, the 332-residue chain is Ribosomal RNA small subunit methyltransferase H (332 aa).

Residues 37-39, D55, F82, D103, and Q110 each bind S-adenosyl-L-methionine; that span reads GGY. The segment at 281 to 332 is disordered; sequence TKRPVTPSDEETAANPRARSAKLRAGERTAAPAQPEAPLPHWPTLASVMGRR.

The protein belongs to the methyltransferase superfamily. RsmH family.

It localises to the cytoplasm. It carries out the reaction cytidine(1402) in 16S rRNA + S-adenosyl-L-methionine = N(4)-methylcytidine(1402) in 16S rRNA + S-adenosyl-L-homocysteine + H(+). Specifically methylates the N4 position of cytidine in position 1402 (C1402) of 16S rRNA. In Rhodopseudomonas palustris (strain BisA53), this protein is Ribosomal RNA small subunit methyltransferase H.